A 54-amino-acid polypeptide reads, in one-letter code: Hemolytic toxin (54 aa).

The plays an important role in the hemolytic activity stretch occupies residues 3–12 (ALAGTIIAGA). Residues 11 to 30 (GASLGFQILDKVLGELGKVS) form an N-terminal region region.

This sequence belongs to the actinoporin family. Sea anemone subfamily. Octamer or nonamer in membranes. Monomer in the soluble state.

The protein resides in the secreted. The protein localises to the nematocyst. It localises to the target cell membrane. Pore-forming protein that forms cations-selective hydrophilic pores of around 1 nm and causes cytolysis. Pore formation is a multi-step process that involves specific recognition of membrane sphingomyelin (but neither cholesterol nor phosphatidylcholine) using aromatic rich region and adjacent phosphocholine (POC) binding site, firm binding to the membrane (mainly driven by hydrophobic interactions) accompanied by the transfer of the N-terminal region to the lipid-water interface and finally pore formation after oligomerization of monomers. The chain is Hemolytic toxin from Heteractis magnifica (Magnificent sea anemone).